Reading from the N-terminus, the 290-residue chain is MIIVTDSERKIRLPFSRGILTRSITLAGIDVGIAYAIATEVQKELEWKGKKSVTTEEIRELTYQKLLEKGLREEAKRYLFWRELRRRKVRLTVLLGGATGVGKSTIATELAFRLGIRSIIGTDTIREVMRKIIAKELLPDIHVSSFLAERVVKAPKNSDPLIYGFETQVKHVSVGIKAVLERARREGLNTLIEGIHVVPGFVEPREDEFMYVIAVPKKDYLIAHFYERARYSQRDAEKYVKHVDRIMRIQDYLVERAREHGIPVIENVELESTVSTILADMMKKLEEMGV.

In terms of domain architecture, ATP-cone spans 1–89; it reads MIIVTDSERK…FWRELRRRKV (89 aa).

Belongs to the 2-phosphoglycerate kinase family. A divalent metal cation serves as cofactor.

The enzyme catalyses (2R)-2-phosphoglycerate + ATP = (2R)-2,3-bisphosphoglycerate + ADP + H(+). It functions in the pathway thermoadapter biosynthesis; cyclic 2,3-diphosphoglycerate biosynthesis; cyclic 2,3-diphosphoglycerate from 2-phospho-D-glycerate: step 1/2. Functionally, catalyzes the phosphorylation of 2-phosphoglycerate to 2,3-diphosphoglycerate. Involved in the biosynthesis of cyclic 2,3-bisphosphoglycerate, a thermoprotectant. This is 2-phosphoglycerate kinase from Thermococcus kodakarensis (strain ATCC BAA-918 / JCM 12380 / KOD1) (Pyrococcus kodakaraensis (strain KOD1)).